The primary structure comprises 198 residues: MIKKSAAILAGGKSSRMNYRNKAFLKYEEDYFIERIIKALEDYEEIIIISNNPGEYKEFGLKVFKDIYPGQGPLSGIHSALNHIKNDYCLVVACDMPFINKDVVNYLGNIKEDYEILIPKFQERLQPLCAIYKKSCKDIMEKELINNSNKLIKTCFKFSMKVVEEFPFIEKVHKKEIKNFYNINTVDEYEDLIKKKEI.

GTP-binding positions include 9–11, Lys-22, Asp-66, and Asp-95; that span reads LAG. Mg(2+) is bound at residue Asp-95.

This sequence belongs to the MobA family. The cofactor is Mg(2+).

It localises to the cytoplasm. It catalyses the reaction Mo-molybdopterin + GTP + H(+) = Mo-molybdopterin guanine dinucleotide + diphosphate. In terms of biological role, transfers a GMP moiety from GTP to Mo-molybdopterin (Mo-MPT) cofactor (Moco or molybdenum cofactor) to form Mo-molybdopterin guanine dinucleotide (Mo-MGD) cofactor. The protein is Probable molybdenum cofactor guanylyltransferase of Clostridium perfringens (strain ATCC 13124 / DSM 756 / JCM 1290 / NCIMB 6125 / NCTC 8237 / Type A).